A 134-amino-acid polypeptide reads, in one-letter code: STAG3-like protein 3 (134 aa).

One can recognise an SCD domain in the interval 10-95 (PKVTCRDVLP…GCFKDWMVSM (86 aa)).

It belongs to the SCC3 family.

It is found in the nucleus. The chain is STAG3-like protein 3 (STAG3L3) from Homo sapiens (Human).